A 485-amino-acid chain; its full sequence is MDLTKLTAHELKDILSNKEVKAEEITRAFLDRINLVDNKLGAYLYVSEEEAIKKAKEIDGKIEKNEELKALSGIPVGIKDNINVKGMQNTCASKILQGYTSPYDAHVTEKIKKEEGIILGKLNMDEFAMGSSTENSAFKLAKNPWDLERVPGGSSGGSAVAVSGCEATLSLGTDTGGSVRQPASFCGIVGLKPTYGRISRSGVVAFGSTLDQVGPMGKDVEDCALLTSAIAGLDKKDFTTADKEVPDYKKSLTKDIKGKKIGIPKEFFGEGLDEKVRKSVEEAIKVLEENGAEVKPCSLPLMDYALSAYYIISSAEASSNLARFDGIRYGYRSKNFKDAKDIYLKSRSEGFGDEVKRRIMLGTYVLSAGYYDAYYKKALKVRKLIKDDFQRVFKDFDAIVSPTSPTTAFKVGEKKDDVMSMYLSDIYTVPISVAGVPAISLPCGMIDGLPVGLQIISDYFKEDVLFNLAYSYEQSVDFYKMRADF.

Active-site charge relay system residues include Lys79 and Ser154. The active-site Acyl-ester intermediate is Ser178.

It belongs to the amidase family. GatA subfamily. As to quaternary structure, heterotrimer of A, B and C subunits.

It carries out the reaction L-glutamyl-tRNA(Gln) + L-glutamine + ATP + H2O = L-glutaminyl-tRNA(Gln) + L-glutamate + ADP + phosphate + H(+). In terms of biological role, allows the formation of correctly charged Gln-tRNA(Gln) through the transamidation of misacylated Glu-tRNA(Gln) in organisms which lack glutaminyl-tRNA synthetase. The reaction takes place in the presence of glutamine and ATP through an activated gamma-phospho-Glu-tRNA(Gln). In Clostridium botulinum (strain Loch Maree / Type A3), this protein is Glutamyl-tRNA(Gln) amidotransferase subunit A.